Here is a 270-residue protein sequence, read N- to C-terminus: Sulfur carrier protein FdhD (270 aa).

Cys108 (cysteine persulfide intermediate) is an active-site residue. 247-252 lines the Mo-bis(molybdopterin guanine dinucleotide) pocket; sequence FIRDGR.

Belongs to the FdhD family.

It localises to the cytoplasm. Its function is as follows. Required for formate dehydrogenase (FDH) activity. Acts as a sulfur carrier protein that transfers sulfur from IscS to the molybdenum cofactor prior to its insertion into FDH. The sequence is that of Sulfur carrier protein FdhD from Halalkalibacterium halodurans (strain ATCC BAA-125 / DSM 18197 / FERM 7344 / JCM 9153 / C-125) (Bacillus halodurans).